A 130-amino-acid polypeptide reads, in one-letter code: Flagellar assembly factor FliW (130 aa).

This sequence belongs to the FliW family. Interacts with translational regulator CsrA and flagellin(s).

The protein localises to the cytoplasm. In terms of biological role, acts as an anti-CsrA protein, binds CsrA and prevents it from repressing translation of its target genes, one of which is flagellin. Binds to flagellin and participates in the assembly of the flagellum. This chain is Flagellar assembly factor FliW, found in Borrelia duttonii (strain Ly).